A 294-amino-acid polypeptide reads, in one-letter code: RAB7A-interacting MON1-CCZ1 complex subunit 1 (294 aa).

Ala2 bears the N-acetylalanine mark.

It belongs to the RIMOC1 family. As to quaternary structure, interacts with the MON1A-CCZ1B complex. Interacts with GDP-bound RAB7A and promotes its interaction with the MON1A-CCZ1B complex.

The protein localises to the cytoplasm. Its subcellular location is the cytosol. Its function is as follows. Plays an important role in the removal of damaged mitochondria via mitophagy by controlling the stability and localization of RAB7A. Required for the recruitment of RAB7A and ATG9A vesicles to damaged mitochondria and promotes the stability of RAB7A by inhibiting its proteasomal degradation during mitophagy. This chain is RAB7A-interacting MON1-CCZ1 complex subunit 1, found in Homo sapiens (Human).